Here is a 206-residue protein sequence, read N- to C-terminus: Fibroblast growth factor 4 (206 aa).

The N-terminal stretch at 1-29 (MAGPGTAAAALLPAVLLAVLAPWAGRGGA) is a signal peptide.

This sequence belongs to the heparin-binding growth factors family. Interacts with FGFR1, FGFR2, FGFR3 and FGFR4. Affinity between fibroblast growth factors (FGFs) and their receptors is increased by heparan sulfate glycosaminoglycans that function as coreceptors.

The protein resides in the secreted. Its function is as follows. Plays an important role in the regulation of embryonic development, cell proliferation, and cell differentiation. Required for normal limb and cardiac valve development during embryogenesis. May play a role in embryonic molar tooth bud development via inducing the expression of MSX1, MSX2 and MSX1-mediated expression of SDC1 in dental mesenchyme cells. The protein is Fibroblast growth factor 4 of Bos taurus (Bovine).